The chain runs to 214 residues: ATP synthase subunit a (214 aa).

6 helical membrane-spanning segments follow: residues Leu-9–Ile-29, Ile-64–Ile-84, Leu-88–Ile-108, Ser-121–Ile-141, Leu-150–Ser-170, and Leu-182–Phe-202.

Belongs to the ATPase A chain family. F-type ATPases have 2 components, CF(1) - the catalytic core - and CF(0) - the membrane proton channel. CF(1) has five subunits: alpha(3), beta(3), gamma(1), delta(1), epsilon(1). CF(0) has three main subunits: a, b and c.

It is found in the mitochondrion inner membrane. Its function is as follows. Mitochondrial membrane ATP synthase (F(1)F(0) ATP synthase or Complex V) produces ATP from ADP in the presence of a proton gradient across the membrane which is generated by electron transport complexes of the respiratory chain. F-type ATPases consist of two structural domains, F(1) - containing the extramembraneous catalytic core and F(0) - containing the membrane proton channel, linked together by a central stalk and a peripheral stalk. During catalysis, ATP synthesis in the catalytic domain of F(1) is coupled via a rotary mechanism of the central stalk subunits to proton translocation. Key component of the proton channel; it may play a direct role in the translocation of protons across the membrane. This chain is ATP synthase subunit a (ATP6), found in Albinaria caerulea (Land snail).